Reading from the N-terminus, the 1011-residue chain is Retinoblastoma-related protein (1011 aa).

A disordered region spans residues M1 to G22. The interval T411 to L612 is domain A. The tract at residues T411 to P860 is pocket. Positions I613–E729 are spacer. A domain B region spans residues T730–P860. Positions Q872–M903 are disordered. Polar residues predominate over residues K873 to P889.

Belongs to the retinoblastoma protein (RB) family.

The protein localises to the nucleus. Its function is as follows. Regulator of biological processes that recruits a histone deacetylase to control gene transcription. May play a role in the entry into mitosis, negatively regulating the cell proliferation. Formation of stable complexes with geminiviridae replication-associated proteins may create a cellular environment which favors viral DNA replication. The chain is Retinoblastoma-related protein (Rb1) from Cocos nucifera (Coconut palm).